Consider the following 1562-residue polypeptide: DNA-directed RNA polymerase subunit beta'' (1562 aa).

Residues 1 to 22 are disordered; it reads MVKKKKFKTKNIQNPPFSSQNS. Residues 11–22 are compositionally biased toward polar residues; that stretch reads NIQNPPFSSQNS. Cys275, Cys338, Cys345, and Cys348 together coordinate Zn(2+).

It belongs to the RNA polymerase beta' chain family. RpoC2 subfamily. In plastids the minimal PEP RNA polymerase catalytic core is composed of four subunits: alpha, beta, beta', and beta''. When a (nuclear-encoded) sigma factor is associated with the core the holoenzyme is formed, which can initiate transcription. Zn(2+) is required as a cofactor.

Its subcellular location is the plastid. It is found in the chloroplast. The catalysed reaction is RNA(n) + a ribonucleoside 5'-triphosphate = RNA(n+1) + diphosphate. In terms of biological role, DNA-dependent RNA polymerase catalyzes the transcription of DNA into RNA using the four ribonucleoside triphosphates as substrates. This Chlorella vulgaris (Green alga) protein is DNA-directed RNA polymerase subunit beta''.